Consider the following 176-residue polypeptide: dCTP deaminase (176 aa).

Residues 102 to 107 (RSTFAR) and D118 contribute to the dCTP site. E128 acts as the Proton donor/acceptor in catalysis. DCTP is bound by residues Y160, K166, and Q167.

Belongs to the dCTP deaminase family. In terms of assembly, homotrimer.

The enzyme catalyses dCTP + H2O + H(+) = dUTP + NH4(+). It functions in the pathway pyrimidine metabolism; dUMP biosynthesis; dUMP from dCTP (dUTP route): step 1/2. In terms of biological role, catalyzes the deamination of dCTP to dUTP. The sequence is that of dCTP deaminase from Staphylothermus marinus (strain ATCC 43588 / DSM 3639 / JCM 9404 / F1).